The following is a 411-amino-acid chain: Mannan endo-1,4-beta-mannosidase 1 (411 aa).

Positions 1–17 (MLNILPFFLFFLPFLIG) are cleaved as a signal peptide. An N-linked (GlcNAc...) asparagine glycan is attached at N33. Substrate contacts are provided by W87 and N197. The active-site Proton donor is the E198. N202 carries an N-linked (GlcNAc...) asparagine glycan. Position 277 (Y277) interacts with substrate. The active-site Nucleophile is E319. W361 lines the substrate pocket. N-linked (GlcNAc...) asparagine glycosylation is found at N366 and N384.

This sequence belongs to the glycosyl hydrolase 5 (cellulase A) family. Expressed in roots, stems and flowers.

It localises to the secreted. The catalysed reaction is Random hydrolysis of (1-&gt;4)-beta-D-mannosidic linkages in mannans, galactomannans and glucomannans.. This is Mannan endo-1,4-beta-mannosidase 1 (MAN1) from Arabidopsis thaliana (Mouse-ear cress).